We begin with the raw amino-acid sequence, 130 residues long: Glycine cleavage system H protein (130 aa).

Residues 22–103 enclose the Lipoyl-binding domain; the sequence is KAYIGISDCA…PYGSWIAAIE (82 aa). K63 is subject to N6-lipoyllysine.

It belongs to the GcvH family. As to quaternary structure, the glycine cleavage system is composed of four proteins: P, T, L and H. Requires (R)-lipoate as cofactor.

Its function is as follows. The glycine cleavage system catalyzes the degradation of glycine. The H protein shuttles the methylamine group of glycine from the P protein to the T protein. The protein is Glycine cleavage system H protein of Clostridium botulinum (strain ATCC 19397 / Type A).